A 361-amino-acid polypeptide reads, in one-letter code: Phospho-N-acetylmuramoyl-pentapeptide-transferase (361 aa).

The next 10 membrane-spanning stretches (helical) occupy residues 28–48 (LSMFTSMFVVLLIGTPFIKFF), 70–90 (IGTPTMGGVLILLGLFSGILL), 94–114 (LSNYHIWFLLFIVSGFGLLGA), 129–149 (VSFKFKIISQILIAIVGIYGL), 169–189 (LIINLGWFFIPFSIFIIVGSS), 205–225 (PVILVAACFAFISYVTGNIVF), 237–257 (MGEVSVFCGSIIGACLGFLWF), 264–284 (IFMGDTGSLALGGSLGAIGII), 289–309 (IVLAITGGLFVLEAVSVIIQV), and 338–358 (TVVIRFWIISIILAMIGLATL).

This sequence belongs to the glycosyltransferase 4 family. MraY subfamily. The cofactor is Mg(2+).

It is found in the cell inner membrane. It carries out the reaction UDP-N-acetyl-alpha-D-muramoyl-L-alanyl-gamma-D-glutamyl-meso-2,6-diaminopimeloyl-D-alanyl-D-alanine + di-trans,octa-cis-undecaprenyl phosphate = di-trans,octa-cis-undecaprenyl diphospho-N-acetyl-alpha-D-muramoyl-L-alanyl-D-glutamyl-meso-2,6-diaminopimeloyl-D-alanyl-D-alanine + UMP. It functions in the pathway cell wall biogenesis; peptidoglycan biosynthesis. Functionally, catalyzes the initial step of the lipid cycle reactions in the biosynthesis of the cell wall peptidoglycan: transfers peptidoglycan precursor phospho-MurNAc-pentapeptide from UDP-MurNAc-pentapeptide onto the lipid carrier undecaprenyl phosphate, yielding undecaprenyl-pyrophosphoryl-MurNAc-pentapeptide, known as lipid I. This is Phospho-N-acetylmuramoyl-pentapeptide-transferase from Pelagibacter ubique (strain HTCC1062).